The chain runs to 360 residues: Protein phosphatase 1L (360 aa).

Over 1–25 (MIEDTMTLLSLLGRIMRYFLLRPET) the chain is Extracellular. A helical membrane pass occupies residues 26–42 (LFLLCISLALWSYFFHT). The Cytoplasmic portion of the chain corresponds to 43 to 360 (DEVKTIVKSS…FRNSSKTEEH (318 aa)). Residues 92 to 351 (NVAVYSIQGR…DNITVMVVKF (260 aa)) enclose the PPM-type phosphatase domain. Mn(2+)-binding residues include D128, G129, D302, and D342.

The protein belongs to the PP2C family. Interacts with MAP3K7/TAK1 and MAP3K5. Requires Mg(2+) as cofactor. Mn(2+) is required as a cofactor. Expressed in brain, heart, testis, liver, lung and skeletal muscle.

The protein resides in the membrane. It catalyses the reaction O-phospho-L-seryl-[protein] + H2O = L-seryl-[protein] + phosphate. It carries out the reaction O-phospho-L-threonyl-[protein] + H2O = L-threonyl-[protein] + phosphate. Functionally, acts as a suppressor of the SAPK signaling pathways by associating with and dephosphorylating MAP3K7/TAK1 and MAP3K5, and by attenuating the association between MAP3K7/TAK1 and MAP2K4 or MAP2K6. In Mus musculus (Mouse), this protein is Protein phosphatase 1L (Ppm1l).